Here is a 724-residue protein sequence, read N- to C-terminus: Probable dipeptidyl-peptidase 5 (724 aa).

Residues 1 to 19 (MGALTWLSVVAAAASTALA) form the signal peptide. 6 N-linked (GlcNAc...) asparagine glycosylation sites follow: asparagine 76, asparagine 97, asparagine 154, asparagine 257, asparagine 383, and asparagine 453. Residue serine 563 is the Charge relay system of the active site. N-linked (GlcNAc...) asparagine glycosylation is present at asparagine 610. Catalysis depends on charge relay system residues aspartate 646 and histidine 678.

This sequence belongs to the peptidase S9C family.

It localises to the secreted. Extracellular dipeptidyl-peptidase which removes N-terminal dipeptides sequentially from polypeptides having unsubstituted N-termini. The protein is Probable dipeptidyl-peptidase 5 (dpp5) of Aspergillus clavatus (strain ATCC 1007 / CBS 513.65 / DSM 816 / NCTC 3887 / NRRL 1 / QM 1276 / 107).